The primary structure comprises 128 residues: MKLLQIRLLVNDFKKSVEFYKDSLGLPISWLENEMEYALFDNGETKIELLSRETMAEIVGEEKKSLEGEAQSKFLLQFKVEDVDKTYDDLHEKGVKCENKPHDRKEWSARVAHFRDPDHNLIEIYKML.

In terms of domain architecture, VOC spans 2–127 (KLLQIRLLVN…DHNLIEIYKM (126 aa)). Ni(2+) contacts are provided by glutamate 48 and glutamate 123.

The protein belongs to the glyoxalase I family.

This is an uncharacterized protein from Bacillus subtilis (strain 168).